The sequence spans 126 residues: MPEPSKSAPAPKKGSKKAVTKAQKKDGKKRKRSRKESYSVYVYKVLKQVHPDTGISSKAMGNMNSFVNDIFERIAGEASRLAHYNKRSTITSREIQTAVRLLLPGELAKHAVSEGTKAVTKYTSSK.

Positions 1-12 (MPEPSKSAPAPK) are enriched in low complexity. The tract at residues 1–36 (MPEPSKSAPAPKKGSKKAVTKAQKKDGKKRKRSRKE) is disordered. Pro-2 is subject to N-acetylproline. Glu-3 bears the ADP-ribosyl glutamic acid mark. The residue at position 6 (Lys-6) is an N6-(2-hydroxyisobutyryl)lysine; alternate. An N6-(beta-hydroxybutyryl)lysine; alternate modification is found at Lys-6. Lys-6 is subject to N6-acetyllysine; alternate. Residue Lys-6 is modified to N6-butyryllysine; alternate. Lys-6 is subject to N6-crotonyllysine; alternate. Lys-6 bears the N6-lactoyllysine; alternate mark. Lys-6 participates in a covalent cross-link: Glycyl lysine isopeptide (Lys-Gly) (interchain with G-Cter in SUMO2); alternate. Ser-7 carries the ADP-ribosylserine modification. N6-(beta-hydroxybutyryl)lysine; alternate is present on Lys-12. An N6-acetyllysine; alternate mark is found at Lys-12 and Lys-13. 2 positions are modified to N6-crotonyllysine; alternate: Lys-12 and Lys-13. An N6-lactoyllysine; alternate modification is found at Lys-12. Lys-13 is subject to N6-(2-hydroxyisobutyryl)lysine; alternate. Phosphoserine; by STK4/MST1 is present on Ser-15. Lys-16, Lys-17, Lys-21, and Lys-24 each carry N6-acetyllysine; alternate. An N6-crotonyllysine; alternate mark is found at Lys-16, Lys-17, Lys-21, and Lys-24. N6-lactoyllysine; alternate is present on residues Lys-16, Lys-17, Lys-21, and Lys-24. Lys-17 is subject to N6-glutaryllysine; alternate. N6-(2-hydroxyisobutyryl)lysine; alternate occurs at positions 21 and 24. An N6-(beta-hydroxybutyryl)lysine; alternate modification is found at Lys-21. Lys-21 is subject to N6-butyryllysine; alternate. A Glycyl lysine isopeptide (Lys-Gly) (interchain with G-Cter in SUMO2); alternate cross-link involves residue Lys-21. Lys-25 carries the post-translational modification N6-(2-hydroxyisobutyryl)lysine. N6-(2-hydroxyisobutyryl)lysine; alternate is present on Lys-35. An N6-(beta-hydroxybutyryl)lysine; alternate modification is found at Lys-35. Lys-35 is modified (N6-crotonyllysine; alternate). An N6-glutaryllysine; alternate modification is found at Lys-35. Lys-35 is subject to N6-succinyllysine; alternate. Residue Lys-35 forms a Glycyl lysine isopeptide (Lys-Gly) (interchain with G-Cter in ubiquitin); alternate linkage. Glu-36 bears the PolyADP-ribosyl glutamic acid mark. The residue at position 37 (Ser-37) is a Phosphoserine; by AMPK. Residues Lys-44, Lys-47, and Lys-58 each carry the N6-(2-hydroxyisobutyryl)lysine; alternate modification. Lys-44 is modified (N6-lactoyllysine; alternate). 2 positions are modified to N6-glutaryllysine; alternate: Lys-44 and Lys-47. Position 47 is an N6-methyllysine; alternate (Lys-47). Lys-58 is modified (N6,N6-dimethyllysine; alternate). A Dimethylated arginine modification is found at Arg-80. An N6-(2-hydroxyisobutyryl)lysine; alternate modification is found at Lys-86. At Lys-86 the chain carries N6-acetyllysine; alternate. Lys-86 carries the N6-lactoyllysine; alternate modification. Lys-86 carries the post-translational modification N6,N6,N6-trimethyllysine; alternate. Residues Arg-87 and Arg-93 each carry the omega-N-methylarginine modification. N6-(2-hydroxyisobutyryl)lysine; alternate is present on Lys-109. Lys-109 carries the N6-lactoyllysine; alternate modification. N6-glutaryllysine; alternate is present on Lys-109. Lys-109 is subject to N6-methyllysine; alternate. O-linked (GlcNAc) serine glycosylation is present at Ser-113. Position 116 is a phosphothreonine (Thr-116). Residues Lys-117 and Lys-121 each carry the N6-(2-hydroxyisobutyryl)lysine; alternate modification. An N6-(beta-hydroxybutyryl)lysine; alternate modification is found at Lys-117. N6-lactoyllysine; alternate is present on residues Lys-117 and Lys-121. An N6-glutaryllysine; alternate mark is found at Lys-117 and Lys-121. An N6-succinyllysine; alternate mark is found at Lys-117 and Lys-121. Lys-117 is modified (N6-methylated lysine; alternate). Lys-121 participates in a covalent cross-link: Glycyl lysine isopeptide (Lys-Gly) (interchain with G-Cter in ubiquitin); alternate.

Belongs to the histone H2B family. As to quaternary structure, the nucleosome is a histone octamer containing two molecules each of H2A, H2B, H3 and H4 assembled in one H3-H4 heterotetramer and two H2A-H2B heterodimers. The octamer wraps approximately 147 bp of DNA. Monoubiquitination at Lys-35 (H2BK34Ub) by the MSL1/MSL2 dimer is required for histone H3 'Lys-4' (H3K4me) and 'Lys-79' (H3K79me) methylation and transcription activation at specific gene loci, such as HOXA9 and MEIS1 loci. Similarly, monoubiquitination at Lys-121 (H2BK120Ub) by the RNF20/40 complex gives a specific tag for epigenetic transcriptional activation and is also prerequisite for histone H3 'Lys-4' and 'Lys-79' methylation. It also functions cooperatively with the FACT dimer to stimulate elongation by RNA polymerase II. H2BK120Ub also acts as a regulator of mRNA splicing: deubiquitination by USP49 is required for efficient cotranscriptional splicing of a large set of exons. In terms of processing, phosphorylated on Ser-15 (H2BS14ph) by STK4/MST1 during apoptosis; which facilitates apoptotic chromatin condensation. Also phosphorylated on Ser-15 in response to DNA double strand breaks (DSBs), and in correlation with somatic hypermutation and immunoglobulin class-switch recombination. Phosphorylation at Ser-37 (H2BS36ph) by AMPK in response to stress promotes transcription. Post-translationally, glcNAcylation at Ser-113 promotes monoubiquitination of Lys-121. It fluctuates in response to extracellular glucose, and associates with transcribed genes. ADP-ribosylated by PARP1 or PARP2 on Ser-7 (H2BS6ADPr) in response to DNA damage. H2BS6ADPr promotes recruitment of CHD1L. Mono-ADP-ribosylated on Glu-3 (H2BE2ADPr) by PARP3 in response to single-strand breaks. Poly ADP-ribosylation on Glu-36 (H2BE35ADPr) by PARP1 regulates adipogenesis: it inhibits phosphorylation at Ser-37 (H2BS36ph), thereby blocking expression of pro-adipogenetic genes. In terms of processing, crotonylation (Kcr) is specifically present in male germ cells and marks testis-specific genes in post-meiotic cells, including X-linked genes that escape sex chromosome inactivation in haploid cells. Crotonylation marks active promoters and enhancers and confers resistance to transcriptional repressors. It is also associated with post-meiotically activated genes on autosomes. Post-translationally, lactylated in macrophages by EP300/P300 by using lactoyl-CoA directly derived from endogenous or exogenous lactate, leading to stimulates gene transcription.

It localises to the nucleus. Its subcellular location is the chromosome. Core component of nucleosome. Nucleosomes wrap and compact DNA into chromatin, limiting DNA accessibility to the cellular machineries which require DNA as a template. Histones thereby play a central role in transcription regulation, DNA repair, DNA replication and chromosomal stability. DNA accessibility is regulated via a complex set of post-translational modifications of histones, also called histone code, and nucleosome remodeling. This chain is Histone H2B type 1-N (H2BC15), found in Bos taurus (Bovine).